A 290-amino-acid polypeptide reads, in one-letter code: Acetylglutamate kinase (290 aa).

Residues 72–73 (GG), arginine 94, and asparagine 187 contribute to the substrate site.

The protein belongs to the acetylglutamate kinase family. ArgB subfamily.

It localises to the plastid. Its subcellular location is the chloroplast. It catalyses the reaction N-acetyl-L-glutamate + ATP = N-acetyl-L-glutamyl 5-phosphate + ADP. Its pathway is amino-acid biosynthesis; L-arginine biosynthesis; N(2)-acetyl-L-ornithine from L-glutamate: step 2/4. In terms of biological role, catalyzes the ATP-dependent phosphorylation of N-acetyl-L-glutamate. The chain is Acetylglutamate kinase from Cyanidioschyzon merolae (strain NIES-3377 / 10D) (Unicellular red alga).